A 311-amino-acid chain; its full sequence is Pseudouridine-5'-phosphate glycosidase (311 aa).

The active-site Proton donor is Glu32. Positions 96 and 116 each coordinate substrate. Asp148 provides a ligand contact to Mn(2+). 150-152 is a substrate binding site; sequence SAD. Catalysis depends on Lys169, which acts as the Nucleophile.

It belongs to the pseudouridine-5'-phosphate glycosidase family. As to quaternary structure, homotrimer. The cofactor is Mn(2+).

It catalyses the reaction D-ribose 5-phosphate + uracil = psi-UMP + H2O. In terms of biological role, catalyzes the reversible cleavage of pseudouridine 5'-phosphate (PsiMP) to ribose 5-phosphate and uracil. Functions biologically in the cleavage direction, as part of a pseudouridine degradation pathway. This chain is Pseudouridine-5'-phosphate glycosidase, found in Roseiflexus sp. (strain RS-1).